The sequence spans 624 residues: Ubiquitin carboxyl-terminal hydrolase 16 (624 aa).

Residues 46-620 enclose the USP domain; the sequence is VGLSNPANDC…EVYLLFYEIE (575 aa). Catalysis depends on Cys-55, which acts as the Nucleophile. The Proton acceptor role is filled by His-424. A disordered region spans residues 453–573; it reads SENPSRVASP…ATDTEASASA (121 aa). The span at 479–496 shows a compositional bias: low complexity; it reads SPPASTSTNSPLSLTPDS. Residues 518-544 show a composition bias toward polar residues; it reads VSFQSTHSSSKQTISPTSAARNSSSLD. Over residues 546-573 the composition is skewed to low complexity; sequence ARLSSPASRSSLAERNASATDTEASASA.

This sequence belongs to the peptidase C19 family.

It carries out the reaction Thiol-dependent hydrolysis of ester, thioester, amide, peptide and isopeptide bonds formed by the C-terminal Gly of ubiquitin (a 76-residue protein attached to proteins as an intracellular targeting signal).. This Emericella nidulans (strain FGSC A4 / ATCC 38163 / CBS 112.46 / NRRL 194 / M139) (Aspergillus nidulans) protein is Ubiquitin carboxyl-terminal hydrolase 16 (ubp16).